A 170-amino-acid polypeptide reads, in one-letter code: NADH-quinone oxidoreductase subunit B (170 aa).

[4Fe-4S] cluster is bound by residues Cys37, Cys38, Cys102, and Cys131.

The protein belongs to the complex I 20 kDa subunit family. In terms of assembly, NDH-1 is composed of 14 different subunits. Subunits NuoB, C, D, E, F, and G constitute the peripheral sector of the complex. [4Fe-4S] cluster is required as a cofactor.

It is found in the cell inner membrane. The enzyme catalyses a quinone + NADH + 5 H(+)(in) = a quinol + NAD(+) + 4 H(+)(out). NDH-1 shuttles electrons from NADH, via FMN and iron-sulfur (Fe-S) centers, to quinones in the respiratory chain. The immediate electron acceptor for the enzyme in this species is believed to be ubiquinone. Couples the redox reaction to proton translocation (for every two electrons transferred, four hydrogen ions are translocated across the cytoplasmic membrane), and thus conserves the redox energy in a proton gradient. In Geotalea uraniireducens (strain Rf4) (Geobacter uraniireducens), this protein is NADH-quinone oxidoreductase subunit B.